The sequence spans 338 residues: UPF0104 membrane protein MTH_1261 (338 aa).

A run of 8 helical transmembrane segments spans residues 6–26, 36–56, 124–144, 149–169, 231–251, 254–274, 275–295, and 310–330; these read AILI…IGPG, DPVY…LFTL, LDTF…VLYF, WILA…FLAL, ISFL…TAFG, ISLL…MIPL, LPGG…YAGV, and ISFW…GSSV.

It belongs to the UPF0104 family.

It is found in the cell membrane. This Methanothermobacter thermautotrophicus (strain ATCC 29096 / DSM 1053 / JCM 10044 / NBRC 100330 / Delta H) (Methanobacterium thermoautotrophicum) protein is UPF0104 membrane protein MTH_1261.